The chain runs to 83 residues: RNA-binding protein Hfq (83 aa).

Residues 10 to 70 (DTFLNQVRKE…ISTVMPLRPI (61 aa)) form the Sm domain.

The protein belongs to the Hfq family. As to quaternary structure, homohexamer.

In terms of biological role, RNA chaperone that binds small regulatory RNA (sRNAs) and mRNAs to facilitate mRNA translational regulation in response to envelope stress, environmental stress and changes in metabolite concentrations. Also binds with high specificity to tRNAs. This Desulfitobacterium hafniense (strain Y51) protein is RNA-binding protein Hfq.